The chain runs to 888 residues: Leucine--tRNA ligase (888 aa).

Residues 42–52 carry the 'HIGH' region motif; the sequence is PYPSGKLHMGH. Residues 640–644 carry the 'KMSKS' region motif; that stretch reads TMSKS. Lys-643 is an ATP binding site.

This sequence belongs to the class-I aminoacyl-tRNA synthetase family.

The protein resides in the cytoplasm. The catalysed reaction is tRNA(Leu) + L-leucine + ATP = L-leucyl-tRNA(Leu) + AMP + diphosphate. This is Leucine--tRNA ligase from Polaromonas naphthalenivorans (strain CJ2).